The chain runs to 124 residues: Small ribosomal subunit protein uS13 (124 aa).

Residues 99–124 (RGQRTRTNARTRKGPRKTVGVMRKKS) are disordered. Positions 101–124 (QRTRTNARTRKGPRKTVGVMRKKS) are enriched in basic residues.

The protein belongs to the universal ribosomal protein uS13 family. Part of the 30S ribosomal subunit. Forms a loose heterodimer with protein S19. Forms two bridges to the 50S subunit in the 70S ribosome.

Its function is as follows. Located at the top of the head of the 30S subunit, it contacts several helices of the 16S rRNA. In the 70S ribosome it contacts the 23S rRNA (bridge B1a) and protein L5 of the 50S subunit (bridge B1b), connecting the 2 subunits; these bridges are implicated in subunit movement. Contacts the tRNAs in the A and P-sites. This is Small ribosomal subunit protein uS13 from Caldicellulosiruptor saccharolyticus (strain ATCC 43494 / DSM 8903 / Tp8T 6331).